The following is a 164-amino-acid chain: Phosphopantetheine adenylyltransferase (164 aa).

S11 contributes to the substrate binding site. ATP-binding positions include 11–12 and H19; that span reads SF. Residues K43, A76, and R90 each contribute to the substrate site. Residues 91–93, E101, and 126–132 contribute to the ATP site; these read GLR and YQHISSS.

Belongs to the bacterial CoaD family. In terms of assembly, homohexamer. Mg(2+) serves as cofactor.

It is found in the cytoplasm. The enzyme catalyses (R)-4'-phosphopantetheine + ATP + H(+) = 3'-dephospho-CoA + diphosphate. It participates in cofactor biosynthesis; coenzyme A biosynthesis; CoA from (R)-pantothenate: step 4/5. Reversibly transfers an adenylyl group from ATP to 4'-phosphopantetheine, yielding dephospho-CoA (dPCoA) and pyrophosphate. The chain is Phosphopantetheine adenylyltransferase from Streptococcus gordonii (strain Challis / ATCC 35105 / BCRC 15272 / CH1 / DL1 / V288).